A 122-amino-acid polypeptide reads, in one-letter code: Small ribosomal subunit protein uS12 (122 aa).

Positions 1 to 45 are disordered; that stretch reads MPTTNQLVRKERKRQTKKTATPALQGSPQRRGVCTRVSTTTPKKP. The span at 18–28 shows a compositional bias: polar residues; the sequence is KTATPALQGSP. The residue at position 89 (Asp-89) is a 3-methylthioaspartic acid.

The protein belongs to the universal ribosomal protein uS12 family. In terms of assembly, part of the 30S ribosomal subunit. Contacts proteins S8 and S17. May interact with IF1 in the 30S initiation complex.

Functionally, with S4 and S5 plays an important role in translational accuracy. Interacts with and stabilizes bases of the 16S rRNA that are involved in tRNA selection in the A site and with the mRNA backbone. Located at the interface of the 30S and 50S subunits, it traverses the body of the 30S subunit contacting proteins on the other side and probably holding the rRNA structure together. The combined cluster of proteins S8, S12 and S17 appears to hold together the shoulder and platform of the 30S subunit. The protein is Small ribosomal subunit protein uS12 of Rubrobacter xylanophilus (strain DSM 9941 / JCM 11954 / NBRC 16129 / PRD-1).